We begin with the raw amino-acid sequence, 436 residues long: Glutamyl-tRNA reductase 2 (436 aa).

Residues 49–52, Ser-106, 111–113, and Gln-117 each bind substrate; these read TCNR and EPQ. Cys-50 serves as the catalytic Nucleophile. 186-191 lines the NADP(+) pocket; that stretch reads GAGKMC.

This sequence belongs to the glutamyl-tRNA reductase family. As to quaternary structure, homodimer.

It carries out the reaction (S)-4-amino-5-oxopentanoate + tRNA(Glu) + NADP(+) = L-glutamyl-tRNA(Glu) + NADPH + H(+). It participates in porphyrin-containing compound metabolism; protoporphyrin-IX biosynthesis; 5-aminolevulinate from L-glutamyl-tRNA(Glu): step 1/2. Functionally, catalyzes the NADPH-dependent reduction of glutamyl-tRNA(Glu) to glutamate 1-semialdehyde (GSA). The protein is Glutamyl-tRNA reductase 2 of Koribacter versatilis (strain Ellin345).